The sequence spans 311 residues: Ribose-phosphate pyrophosphokinase (311 aa).

ATP-binding positions include 34 to 36 (DQE) and 93 to 94 (RQ). Mg(2+) contacts are provided by His-127 and Asp-168. The active site involves Lys-191. Residues Arg-193, Asp-217, and 221-225 (DSGGT) contribute to the D-ribose 5-phosphate site.

The protein belongs to the ribose-phosphate pyrophosphokinase family. Class I subfamily. In terms of assembly, homohexamer. Mg(2+) is required as a cofactor.

It localises to the cytoplasm. It carries out the reaction D-ribose 5-phosphate + ATP = 5-phospho-alpha-D-ribose 1-diphosphate + AMP + H(+). It participates in metabolic intermediate biosynthesis; 5-phospho-alpha-D-ribose 1-diphosphate biosynthesis; 5-phospho-alpha-D-ribose 1-diphosphate from D-ribose 5-phosphate (route I): step 1/1. Functionally, involved in the biosynthesis of the central metabolite phospho-alpha-D-ribosyl-1-pyrophosphate (PRPP) via the transfer of pyrophosphoryl group from ATP to 1-hydroxyl of ribose-5-phosphate (Rib-5-P). The chain is Ribose-phosphate pyrophosphokinase from Mesorhizobium japonicum (strain LMG 29417 / CECT 9101 / MAFF 303099) (Mesorhizobium loti (strain MAFF 303099)).